A 520-amino-acid polypeptide reads, in one-letter code: 2-isopropylmalate synthase (520 aa).

One can recognise a Pyruvate carboxyltransferase domain in the interval 12–274 (IRIFDTTLRD…DTAINTPRIV (263 aa)). Residues Asp21, His209, His211, and Asn245 each contribute to the Mn(2+) site. The tract at residues 396-520 (RLASMTISDV…VVAGKTAAVA (125 aa)) is regulatory domain.

It belongs to the alpha-IPM synthase/homocitrate synthase family. LeuA type 1 subfamily. In terms of assembly, homodimer. Mn(2+) is required as a cofactor.

It localises to the cytoplasm. The catalysed reaction is 3-methyl-2-oxobutanoate + acetyl-CoA + H2O = (2S)-2-isopropylmalate + CoA + H(+). It participates in amino-acid biosynthesis; L-leucine biosynthesis; L-leucine from 3-methyl-2-oxobutanoate: step 1/4. In terms of biological role, catalyzes the condensation of the acetyl group of acetyl-CoA with 3-methyl-2-oxobutanoate (2-ketoisovalerate) to form 3-carboxy-3-hydroxy-4-methylpentanoate (2-isopropylmalate). This is 2-isopropylmalate synthase from Xanthomonas campestris pv. campestris (strain B100).